We begin with the raw amino-acid sequence, 1079 residues long: Error-prone DNA polymerase (1079 aa).

This sequence belongs to the DNA polymerase type-C family. DnaE2 subfamily.

Its subcellular location is the cytoplasm. It catalyses the reaction DNA(n) + a 2'-deoxyribonucleoside 5'-triphosphate = DNA(n+1) + diphosphate. In terms of biological role, DNA polymerase involved in damage-induced mutagenesis and translesion synthesis (TLS). It is not the major replicative DNA polymerase. The chain is Error-prone DNA polymerase from Ralstonia pickettii (strain 12J).